Here is a 381-residue protein sequence, read N- to C-terminus: MTEPAIRYRLIKKDKHTGARLGELITPHGTFPTPMFMPVGTLATVKTMSPEELKEMGAGVILSNTYHLWLRPGEDLVEEAGGLHKFMNWDQPILTDSGGFQVFSLSDMRKIEEEGVHFRNHLNGSKMFLSPEKAINIQNKLGSDIMMSFDECPPFDESYEYVKRSIERTSRWAERGLKAHANPDRQGLFGIVQGAGFEDLRRQSAKDLVSMDFPGYSIGGLSVGESKEEMNRVLDFTTPLIPENKPRYLMGVGAPDSLIDGVIRGIDMFDCVLPTRIARNGTCMTSQGRLVVKNAQYARDFRPLDEKCDCYVCRNYTRAYIRHLIKCDETFGIRLTSYHNLYFLLDLMKNVRQAIMDDNLLEFRQAFFEEYGFNKANAKSF.

D96 functions as the Proton acceptor in the catalytic mechanism. Residues 96 to 100 (DSGGF), D150, Q193, and G220 contribute to the substrate site. The RNA binding stretch occupies residues 251-257 (GVGAPDS). Residue D270 is the Nucleophile of the active site. Residues 275 to 279 (TRIAR) are RNA binding; important for wobble base 34 recognition. The Zn(2+) site is built by C308, C310, C313, and H339.

Belongs to the queuine tRNA-ribosyltransferase family. In terms of assembly, homodimer. Within each dimer, one monomer is responsible for RNA recognition and catalysis, while the other monomer binds to the replacement base PreQ1. Zn(2+) is required as a cofactor.

The catalysed reaction is 7-aminomethyl-7-carbaguanine + guanosine(34) in tRNA = 7-aminomethyl-7-carbaguanosine(34) in tRNA + guanine. The protein operates within tRNA modification; tRNA-queuosine biosynthesis. In terms of biological role, catalyzes the base-exchange of a guanine (G) residue with the queuine precursor 7-aminomethyl-7-deazaguanine (PreQ1) at position 34 (anticodon wobble position) in tRNAs with GU(N) anticodons (tRNA-Asp, -Asn, -His and -Tyr). Catalysis occurs through a double-displacement mechanism. The nucleophile active site attacks the C1' of nucleotide 34 to detach the guanine base from the RNA, forming a covalent enzyme-RNA intermediate. The proton acceptor active site deprotonates the incoming PreQ1, allowing a nucleophilic attack on the C1' of the ribose to form the product. After dissociation, two additional enzymatic reactions on the tRNA convert PreQ1 to queuine (Q), resulting in the hypermodified nucleoside queuosine (7-(((4,5-cis-dihydroxy-2-cyclopenten-1-yl)amino)methyl)-7-deazaguanosine). The polypeptide is Queuine tRNA-ribosyltransferase (Enterococcus faecalis (strain ATCC 700802 / V583)).